Here is a 334-residue protein sequence, read N- to C-terminus: N-acetyl-gamma-glutamyl-phosphate reductase (334 aa).

Cysteine 154 is a catalytic residue.

This sequence belongs to the NAGSA dehydrogenase family. Type 1 subfamily.

It localises to the cytoplasm. It catalyses the reaction N-acetyl-L-glutamate 5-semialdehyde + phosphate + NADP(+) = N-acetyl-L-glutamyl 5-phosphate + NADPH + H(+). It functions in the pathway amino-acid biosynthesis; L-arginine biosynthesis; N(2)-acetyl-L-ornithine from L-glutamate: step 3/4. Catalyzes the NADPH-dependent reduction of N-acetyl-5-glutamyl phosphate to yield N-acetyl-L-glutamate 5-semialdehyde. The chain is N-acetyl-gamma-glutamyl-phosphate reductase from Shigella flexneri.